The sequence spans 118 residues: Protein TusC (118 aa).

This sequence belongs to the DsrF/TusC family. Heterohexamer, formed by a dimer of trimers. The hexameric TusBCD complex contains 2 copies each of TusB, TusC and TusD. The TusBCD complex interacts with TusE.

Its subcellular location is the cytoplasm. In terms of biological role, part of a sulfur-relay system required for 2-thiolation of 5-methylaminomethyl-2-thiouridine (mnm(5)s(2)U) at tRNA wobble positions. In Salmonella typhimurium (strain LT2 / SGSC1412 / ATCC 700720), this protein is Protein TusC.